Consider the following 119-residue polypeptide: MIQPQTYLEVADNSGARKLMCIRVLNRKIGHIGDVIIAVVKEALPNMPIKKSEVVRAVIVRTAHTIQRDNGMSIRFDDNAAVIINKEGNPRGTRVFGPIARELRERDFMKIVSLAPEVL.

The protein belongs to the universal ribosomal protein uL14 family. In terms of assembly, part of the 50S ribosomal subunit.

It is found in the plastid. The protein resides in the chloroplast. Its function is as follows. Binds to 23S rRNA. This is Large ribosomal subunit protein uL14c from Ostreococcus tauri.